The chain runs to 257 residues: tRNA (guanine-N(1)-)-methyltransferase (257 aa).

S-adenosyl-L-methionine contacts are provided by residues G112 and 136–141; that span reads LGDYVL.

It belongs to the RNA methyltransferase TrmD family. Homodimer.

It localises to the cytoplasm. It catalyses the reaction guanosine(37) in tRNA + S-adenosyl-L-methionine = N(1)-methylguanosine(37) in tRNA + S-adenosyl-L-homocysteine + H(+). Specifically methylates guanosine-37 in various tRNAs. The polypeptide is tRNA (guanine-N(1)-)-methyltransferase (Salinispora arenicola (strain CNS-205)).